Here is a 525-residue protein sequence, read N- to C-terminus: GMP synthase [glutamine-hydrolyzing] (525 aa).

The Glutamine amidotransferase type-1 domain maps to Pro16 to Arg205. Catalysis depends on Cys93, which acts as the Nucleophile. Catalysis depends on residues His179 and Glu181. The GMPS ATP-PPase domain occupies Trp206–Arg399. Ser233–Ala239 is an ATP binding site.

As to quaternary structure, homodimer.

It carries out the reaction XMP + L-glutamine + ATP + H2O = GMP + L-glutamate + AMP + diphosphate + 2 H(+). Its pathway is purine metabolism; GMP biosynthesis; GMP from XMP (L-Gln route): step 1/1. Catalyzes the synthesis of GMP from XMP. This is GMP synthase [glutamine-hydrolyzing] from Mycobacterium marinum (strain ATCC BAA-535 / M).